The following is a 424-amino-acid chain: Adenosylmethionine-8-amino-7-oxononanoate aminotransferase (424 aa).

Substrate is bound at residue Trp-46. A pyridoxal 5'-phosphate-binding site is contributed by 106–107 (GS). Position 138 (Tyr-138) interacts with substrate. Residue Asp-240 coordinates pyridoxal 5'-phosphate. Positions 269 and 303 each coordinate substrate. Lys-269 is subject to N6-(pyridoxal phosphate)lysine. 304–305 (HS) contributes to the pyridoxal 5'-phosphate binding site. Arg-391 is a binding site for substrate.

The protein belongs to the class-III pyridoxal-phosphate-dependent aminotransferase family. BioA subfamily. Homodimer. Requires pyridoxal 5'-phosphate as cofactor.

The protein resides in the cytoplasm. It carries out the reaction (8S)-8-amino-7-oxononanoate + S-adenosyl-L-methionine = S-adenosyl-4-methylsulfanyl-2-oxobutanoate + (7R,8S)-7,8-diammoniononanoate. Its pathway is cofactor biosynthesis; biotin biosynthesis; 7,8-diaminononanoate from 8-amino-7-oxononanoate (SAM route): step 1/1. Catalyzes the transfer of the alpha-amino group from S-adenosyl-L-methionine (SAM) to 7-keto-8-aminopelargonic acid (KAPA) to form 7,8-diaminopelargonic acid (DAPA). It is the only aminotransferase known to utilize SAM as an amino donor. Complements a bioU deletion in Synechocystis PCC 6803. The chain is Adenosylmethionine-8-amino-7-oxononanoate aminotransferase from Synechococcus elongatus (strain ATCC 33912 / PCC 7942 / FACHB-805) (Anacystis nidulans R2).